Consider the following 320-residue polypeptide: Ferrochelatase (320 aa).

Fe cation contacts are provided by His-194 and Glu-275.

Belongs to the ferrochelatase family.

It localises to the cytoplasm. It catalyses the reaction heme b + 2 H(+) = protoporphyrin IX + Fe(2+). It participates in porphyrin-containing compound metabolism; protoheme biosynthesis; protoheme from protoporphyrin-IX: step 1/1. In terms of biological role, catalyzes the ferrous insertion into protoporphyrin IX. This is Ferrochelatase from Klebsiella pneumoniae (strain 342).